A 244-amino-acid chain; its full sequence is Carboxy-S-adenosyl-L-methionine synthase (244 aa).

S-adenosyl-L-methionine contacts are provided by residues tyrosine 40, 65 to 67 (GCS), 90 to 91 (DN), 119 to 120 (DL), asparagine 134, and arginine 201.

The protein belongs to the class I-like SAM-binding methyltransferase superfamily. Cx-SAM synthase family. In terms of assembly, homodimer.

The enzyme catalyses prephenate + S-adenosyl-L-methionine = carboxy-S-adenosyl-L-methionine + 3-phenylpyruvate + H2O. Catalyzes the conversion of S-adenosyl-L-methionine (SAM) to carboxy-S-adenosyl-L-methionine (Cx-SAM). This chain is Carboxy-S-adenosyl-L-methionine synthase, found in Trichlorobacter lovleyi (strain ATCC BAA-1151 / DSM 17278 / SZ) (Geobacter lovleyi).